Consider the following 94-residue polypeptide: Protein TraQ (94 aa).

Transmembrane regions (helical) follow at residues 14 to 34 (ITGM…RLVY) and 37 to 57 (PWMA…FGAY).

Interacts with pilin.

Its subcellular location is the cell inner membrane. Required for efficient expression of pilin. Functions as a transient chaperone for propilin, preventing it from being prematurely degraded, and also promotes propilin translocation, positioning it in the membrane for processing to mature pilin. The sequence is that of Protein TraQ (traQ) from Escherichia coli (strain K12).